The sequence spans 665 residues: Translation factor guf1, mitochondrial (665 aa).

The N-terminal 40 residues, 1–40, are a transit peptide targeting the mitochondrion; sequence MRGCLQLARWLSAAPTRPAASHWPGLCAAPRFFSHSAILR. The tr-type G domain maps to 67 to 247; it reads ERYRNFCIVA…TVVDKIPAPI (181 aa). GTP is bound by residues 76 to 83, 140 to 144, and 194 to 197; these read AHVDHGKS, DTPGH, and NKVD.

It belongs to the TRAFAC class translation factor GTPase superfamily. Classic translation factor GTPase family. LepA subfamily.

The protein localises to the mitochondrion inner membrane. The catalysed reaction is GTP + H2O = GDP + phosphate + H(+). Its function is as follows. Promotes mitochondrial protein synthesis. May act as a fidelity factor of the translation reaction, by catalyzing a one-codon backward translocation of tRNAs on improperly translocated ribosomes. Binds to mitochondrial ribosomes in a GTP-dependent manner. This chain is Translation factor guf1, mitochondrial (guf1), found in Aspergillus terreus (strain NIH 2624 / FGSC A1156).